Here is a 317-residue protein sequence, read N- to C-terminus: GTPase Era (317 aa).

The Era-type G domain occupies 23–190 (RSGFVALIGP…MDYLVETLPE (168 aa)). The interval 31 to 38 (GPTNAGKS) is G1. 31 to 38 (GPTNAGKS) lines the GTP pocket. Residues 57–61 (QTTRA) form a G2 region. The G3 stretch occupies residues 78-81 (DTPG). Residues 78–82 (DTPGI) and 140–143 (NKID) contribute to the GTP site. Residues 140 to 143 (NKID) form a G4 region. Residues 169 to 171 (ISA) form a G5 region. Residues 221 to 298 (LHQELPYASH…HLFLFVKVRE (78 aa)) enclose the KH type-2 domain.

This sequence belongs to the TRAFAC class TrmE-Era-EngA-EngB-Septin-like GTPase superfamily. Era GTPase family. As to quaternary structure, monomer.

The protein localises to the cytoplasm. Its subcellular location is the cell inner membrane. Functionally, an essential GTPase that binds both GDP and GTP, with rapid nucleotide exchange. Plays a role in 16S rRNA processing and 30S ribosomal subunit biogenesis and possibly also in cell cycle regulation and energy metabolism. This Agrobacterium fabrum (strain C58 / ATCC 33970) (Agrobacterium tumefaciens (strain C58)) protein is GTPase Era.